Here is a 183-residue protein sequence, read N- to C-terminus: Protein jagunal homolog 1-B (183 aa).

Topologically, residues 1–39 (MASRAGPRATGTDGSDYQHRERVASHYQMSVALKSEIKK) are cytoplasmic. The helical transmembrane segment at 40-60 (LNIAHAVVWFLVAAQVLVSQL) threads the bilayer. At 61 to 71 (NLVSHKVVASP) the chain is on the lumenal side. Residues 72–92 (YQWEYTYLLSIIPTVFSFMAL) traverse the membrane as a helical segment. Residues 93 to 99 (PKNNISY) lie on the Cytoplasmic side of the membrane. A helical transmembrane segment spans residues 100–120 (LVISMISGGLFCIGPILYGGM). Residues 121-137 (EMFPVAQQLYRHGKAYR) are Lumenal-facing. The chain crosses the membrane as a helical span at residues 138 to 158 (FIFGFSAVSIMYLVLIISVQV). At 159–183 (HGWQIYYSKKLLDAWFTNTQDKKKK) the chain is on the cytoplasmic side.

It belongs to the jagunal family.

Its subcellular location is the endoplasmic reticulum membrane. Endoplasmic reticulum transmembrane protein involved in vesicle-mediated transport, which is required for neutrophil function. This Danio rerio (Zebrafish) protein is Protein jagunal homolog 1-B (jagn1b).